Here is a 681-residue protein sequence, read N- to C-terminus: Methionine--tRNA ligase (681 aa).

The short motif at 14–24 (PYANGSIHLGH) is the 'HIGH' region element. Zn(2+) is bound by residues cysteine 145, cysteine 148, cysteine 158, and cysteine 161. Residues 331–335 (KMSKS) carry the 'KMSKS' region motif. Lysine 334 lines the ATP pocket. The 103-residue stretch at 579–681 (AFAAVDLRIA…AGAKPGQRVH (103 aa)) folds into the tRNA-binding domain.

The protein belongs to the class-I aminoacyl-tRNA synthetase family. MetG type 1 subfamily. As to quaternary structure, homodimer. Zn(2+) is required as a cofactor.

The protein resides in the cytoplasm. The enzyme catalyses tRNA(Met) + L-methionine + ATP = L-methionyl-tRNA(Met) + AMP + diphosphate. Functionally, is required not only for elongation of protein synthesis but also for the initiation of all mRNA translation through initiator tRNA(fMet) aminoacylation. The chain is Methionine--tRNA ligase from Azotobacter vinelandii (strain DJ / ATCC BAA-1303).